The primary structure comprises 364 residues: Histidinol-phosphate aminotransferase (364 aa).

Position 224 is an N6-(pyridoxal phosphate)lysine (Lys224).

The protein belongs to the class-II pyridoxal-phosphate-dependent aminotransferase family. Histidinol-phosphate aminotransferase subfamily. Homodimer. Requires pyridoxal 5'-phosphate as cofactor.

The enzyme catalyses L-histidinol phosphate + 2-oxoglutarate = 3-(imidazol-4-yl)-2-oxopropyl phosphate + L-glutamate. The protein operates within amino-acid biosynthesis; L-histidine biosynthesis; L-histidine from 5-phospho-alpha-D-ribose 1-diphosphate: step 7/9. This Anaeromyxobacter sp. (strain Fw109-5) protein is Histidinol-phosphate aminotransferase.